A 37-amino-acid chain; its full sequence is Large ribosomal subunit protein bL36c (37 aa).

It belongs to the bacterial ribosomal protein bL36 family.

It localises to the plastid. The sequence is that of Large ribosomal subunit protein bL36c from Cuscuta reflexa (Southern Asian dodder).